Here is a 109-residue protein sequence, read N- to C-terminus: Small ribosomal subunit protein uS17 (109 aa).

Belongs to the universal ribosomal protein uS17 family. As to quaternary structure, part of the 30S ribosomal subunit.

In terms of biological role, one of the primary rRNA binding proteins, it binds specifically to the 5'-end of 16S ribosomal RNA. The polypeptide is Small ribosomal subunit protein uS17 (Thermoplasma volcanium (strain ATCC 51530 / DSM 4299 / JCM 9571 / NBRC 15438 / GSS1)).